A 75-amino-acid chain; its full sequence is Large ribosomal subunit protein bL31 (75 aa).

The Zn(2+) site is built by cysteine 16, cysteine 18, cysteine 37, and cysteine 40.

The protein belongs to the bacterial ribosomal protein bL31 family. Type A subfamily. In terms of assembly, part of the 50S ribosomal subunit. It depends on Zn(2+) as a cofactor.

In terms of biological role, binds the 23S rRNA. This chain is Large ribosomal subunit protein bL31, found in Nitrosospira multiformis (strain ATCC 25196 / NCIMB 11849 / C 71).